We begin with the raw amino-acid sequence, 270 residues long: Urease accessory protein UreD (270 aa).

It belongs to the UreD family. UreD, UreF and UreG form a complex that acts as a GTP-hydrolysis-dependent molecular chaperone, activating the urease apoprotein by helping to assemble the nickel containing metallocenter of UreC. The UreE protein probably delivers the nickel.

The protein resides in the cytoplasm. Required for maturation of urease via the functional incorporation of the urease nickel metallocenter. The sequence is that of Urease accessory protein UreD from Actinobacillus pleuropneumoniae serotype 5b (strain L20).